The sequence spans 460 residues: Cysteine proteinase 7 (460 aa).

A signal peptide spans 1–17; that stretch reads MKVLSALCVLLVSVATA. A propeptide spans 18 to 111 (activation peptide); it reads KQQLSEVEYR…TESDKIFDAS (94 aa). 2 cysteine pairs are disulfide-bonded: Cys131–Cys176 and Cys167–Cys210. The active site involves Cys134. N-linked (GlcNAc...) asparagine glycans are attached at residues Asn226 and Asn252. Cys268 and Cys445 are joined by a disulfide. His275 is an active-site residue. Positions 285 to 409 are disordered; the sequence is GSGSSGSHGG…GSSSGSNSNG (125 aa). Low complexity predominate over residues 294-359; it reads GSQSQSAGSD…QSGSQSGNSG (66 aa). The span at 367–385 shows a compositional bias: gly residues; sequence AGSGSGSGSGSGSGSGSGS. Residues 386-409 show a composition bias toward low complexity; it reads VSGSASGSASGSASGSSSGSNSNG. Residue Asn423 is part of the active site.

It belongs to the peptidase C1 family. Post-translationally, glycosylated; contains GlcNAc-alpha-1-P-Ser residues. Also N-glycosylated.

The protein resides in the lysosome. This chain is Cysteine proteinase 7 (cprG), found in Dictyostelium discoideum (Social amoeba).